A 331-amino-acid chain; its full sequence is Glycerol-3-phosphate dehydrogenase [NAD(P)+] (331 aa).

NADPH is bound by residues serine 10, tryptophan 11, arginine 31, arginine 32, and lysine 105. The sn-glycerol 3-phosphate site is built by lysine 105 and glycine 135. Residue alanine 139 participates in NADPH binding. 5 residues coordinate sn-glycerol 3-phosphate: lysine 190, aspartate 243, serine 253, arginine 254, and asparagine 255. Lysine 190 (proton acceptor) is an active-site residue. NADPH is bound at residue arginine 254. 2 residues coordinate NADPH: valine 279 and glutamate 281.

The protein belongs to the NAD-dependent glycerol-3-phosphate dehydrogenase family.

The protein resides in the cytoplasm. The catalysed reaction is sn-glycerol 3-phosphate + NAD(+) = dihydroxyacetone phosphate + NADH + H(+). The enzyme catalyses sn-glycerol 3-phosphate + NADP(+) = dihydroxyacetone phosphate + NADPH + H(+). The protein operates within membrane lipid metabolism; glycerophospholipid metabolism. Functionally, catalyzes the reduction of the glycolytic intermediate dihydroxyacetone phosphate (DHAP) to sn-glycerol 3-phosphate (G3P), the key precursor for phospholipid synthesis. The protein is Glycerol-3-phosphate dehydrogenase [NAD(P)+] of Corynebacterium diphtheriae (strain ATCC 700971 / NCTC 13129 / Biotype gravis).